We begin with the raw amino-acid sequence, 504 residues long: ATP synthase subunit alpha, chloroplastic (504 aa).

Position 170–177 (170–177) interacts with ATP; the sequence is GDRQTGKT.

Belongs to the ATPase alpha/beta chains family. In terms of assembly, F-type ATPases have 2 components, CF(1) - the catalytic core - and CF(0) - the membrane proton channel. CF(1) has five subunits: alpha(3), beta(3), gamma(1), delta(1), epsilon(1). CF(0) has four main subunits: a, b, b' and c.

The protein resides in the plastid. It localises to the chloroplast thylakoid membrane. It catalyses the reaction ATP + H2O + 4 H(+)(in) = ADP + phosphate + 5 H(+)(out). Its function is as follows. Produces ATP from ADP in the presence of a proton gradient across the membrane. The alpha chain is a regulatory subunit. The chain is ATP synthase subunit alpha, chloroplastic from Cyanidium caldarium (Red alga).